Reading from the N-terminus, the 469-residue chain is DENN domain-containing protein 2D (469 aa).

The disordered stretch occupies residues 17 to 44 (LPRLRAGQSQNNPGEAVTEPERIQEHSP). The uDENN domain maps to 55–204 (EYLLVVSLKK…AFPAPGKTVT (150 aa)). Residues 226–359 (HLEHVDFSVL…LQDDILDSLG (134 aa)) form the cDENN domain. The region spanning 361-445 (GINELKTSEQ…QEAEKSRNPP (85 aa)) is the dDENN domain.

It localises to the cytoplasm. Guanine nucleotide exchange factor (GEF) which may activate RAB9A and RAB9B. Promotes the exchange of GDP to GTP, converting inactive GDP-bound Rab proteins into their active GTP-bound form. The chain is DENN domain-containing protein 2D (Dennd2d) from Mus musculus (Mouse).